The chain runs to 92 residues: Beta-2-microglobulin (92 aa).

The region spanning 2–91 (PQIQVYTRHP…VSLNEPKTVI (90 aa)) is the Ig-like C1-type domain. Cys-22 and Cys-77 are joined by a disulfide.

This sequence belongs to the beta-2-microglobulin family. In terms of assembly, heterodimer of an alpha chain and a beta chain. Beta-2-microglobulin is the beta-chain of major histocompatibility complex class I molecules.

It is found in the secreted. In terms of biological role, component of the class I major histocompatibility complex (MHC). Involved in the presentation of peptide antigens to the immune system. The sequence is that of Beta-2-microglobulin (B2m) from Mus cervicolor (Fawn-colored mouse).